We begin with the raw amino-acid sequence, 204 residues long: Tat proofreading chaperone DmsD (204 aa).

The protein belongs to the TorD/DmsD family. DmsD subfamily.

Functionally, required for biogenesis/assembly of DMSO reductase, but not for the interaction of the DmsA signal peptide with the Tat system. May be part of a chaperone cascade complex that facilitates a folding-maturation pathway for the substrate protein. In Salmonella paratyphi A (strain ATCC 9150 / SARB42), this protein is Tat proofreading chaperone DmsD.